We begin with the raw amino-acid sequence, 811 residues long: Receptor-like protein 52 (811 aa).

The N-terminal stretch at 1 to 22 is a signal peptide; sequence MTFLPLLFIFFFLTSIPFPAFS. Over 23-770 the chain is Extracellular; sequence QYNDRSTLLN…EDEEEVMNWT (748 aa). N-linked (GlcNAc...) asparagine glycans are attached at residues Asn-47, Asn-64, Asn-74, Asn-93, Asn-109, and Asn-124. LRR repeat units follow at residues 62-86, 87-110, 112-134, 135-159, 161-183, and 184-208; these read AGNV…ICNF, PNLK…LYNC, KLQY…INRL, APKL…IGRI, KLKV…IGDL, and SELE…EFGK. The stretch at 211 to 233 is one LRR 7; degenerate repeat; the sequence is KLKYMWLEEMNLIGEISAVVFEN. Residues Asn-233, Asn-246, Asn-260, Asn-295, and Asn-304 are each glycosylated (N-linked (GlcNAc...) asparagine). LRR repeat units follow at residues 234–258, 260–281, 282–305, 307–329, 330–354, 356–377, 379–401, and 403–427; these read MTDL…LFGL, NLTE…SISA, KNLV…IGNL, NLEL…IGKL, PELK…GFIS, LERF…LCHG, KLQS…LGDC, and TLSS…TRSN. N-linked (GlcNAc...) asparagine glycans are attached at residues Asn-389, Asn-422, Asn-429, Asn-455, Asn-464, and Asn-485. LRR repeat units lie at residues 441-465, 466-489, 491-511, 512-537, 539-557, 558-581, 625-649, 650-673, 674-697, and 699-722; these read LHSL…IANL, STLE…ISTS, KSID…LVRI, SSLE…SMQQ, QVLV…QNGF, SKLR…FFVN, LNTF…VGLL, KELH…MGNL, IELE…LGKL, and YLAY…QFQT. Residue Asn-525 is glycosylated (N-linked (GlcNAc...) asparagine). 2 N-linked (GlcNAc...) asparagine glycosylation sites follow: Asn-571 and Asn-581. Asn-656 carries an N-linked (GlcNAc...) asparagine glycan. The N-linked (GlcNAc...) asparagine glycan is linked to Asn-704. The helical transmembrane segment at 771–791 threads the bilayer; the sequence is AAAIGSIPGISIGLTMGYILV. The Cytoplasmic portion of the chain corresponds to 792-811; sequence SYKPEWLMNSGRNKRRIKPI.

Belongs to the RLP family.

The protein localises to the cell membrane. Required for defense against powdery mildew pathogen. The polypeptide is Receptor-like protein 52 (Arabidopsis thaliana (Mouse-ear cress)).